We begin with the raw amino-acid sequence, 510 residues long: Polyadenylation factor subunit 2 (510 aa).

6 WD repeats span residues Lys26–Val65, Ala91–Val130, Gly133–Thr172, Ser175–Ile215, Gly218–Gly258, and Ala288–Tyr327.

It is found in the nucleus. In terms of biological role, required for 3'-end cleavage and polyadenylation of pre-mRNAs. Also involved in chromosome segregation where it has a role in chromosome attachment to the mitotic spindle. This Aspergillus fumigatus (strain ATCC MYA-4609 / CBS 101355 / FGSC A1100 / Af293) (Neosartorya fumigata) protein is Polyadenylation factor subunit 2 (pfs2).